Consider the following 140-residue polypeptide: Large-conductance mechanosensitive channel (140 aa).

The next 3 helical transmembrane spans lie at 14–34 (VLDLAVGVIIGGAFTSIVKSL), 37–57 (YLINPLIGLFIGGIDFSDWVL), and 66–86 (FGSFINAVINFLIIAFVVFIL).

The protein belongs to the MscL family. In terms of assembly, homopentamer.

It localises to the cell membrane. Channel that opens in response to stretch forces in the membrane lipid bilayer. May participate in the regulation of osmotic pressure changes within the cell. In Pediococcus pentosaceus (strain ATCC 25745 / CCUG 21536 / LMG 10740 / 183-1w), this protein is Large-conductance mechanosensitive channel.